An 88-amino-acid chain; its full sequence is Small ribosomal subunit protein bS20 (88 aa).

The interval 1-21 (MANTTSAKKATRKIARRTAVN) is disordered.

Belongs to the bacterial ribosomal protein bS20 family.

In terms of biological role, binds directly to 16S ribosomal RNA. This chain is Small ribosomal subunit protein bS20, found in Agrobacterium fabrum (strain C58 / ATCC 33970) (Agrobacterium tumefaciens (strain C58)).